The sequence spans 405 residues: MSVDMKLNRAQFDAVMVPNYAPAAVIPVRGEGSRVWDQEGNEFIDFAGGIAVNCLGHCHPALVNALKTQGEKLWHLSNVMTNEPALELATKLVNSTFAERVYFANSGAEANEAALKLARRYALEKHGVEKDEIIAFDKAFHGRTFFTVSVGGQAAYSDGFGPKPQSITHLPFNDVAALEAAVSDKTCAIMLEPLQGEGGIIDADPAFLKAVRELANKHNALVIFDEVQTGVGRTGELYAYMGTDIVPDILTTAKALGGGFPIAAMLTTTEIAEHLKVGTHGSTYGGNPLACAIGNAVLDVVNTPEVLNGVKHREQLLRDGLNKINEKYHVFSEVRGKGLLLGAVLNEQYQGRSRDFLVASVAEGLMSLMAGANVVRFAPSLVIPEADIAEGLARFERAVASIAAA.

Pyridoxal 5'-phosphate-binding positions include 107–108 (GA) and F140. R143 lines the N(2)-acetyl-L-ornithine pocket. 225-228 (DEVQ) contacts pyridoxal 5'-phosphate. Residue K254 is modified to N6-(pyridoxal phosphate)lysine. Position 282 (S282) interacts with N(2)-acetyl-L-ornithine. T283 contributes to the pyridoxal 5'-phosphate binding site.

Belongs to the class-III pyridoxal-phosphate-dependent aminotransferase family. ArgD subfamily. Homodimer. Pyridoxal 5'-phosphate serves as cofactor.

The protein resides in the cytoplasm. It carries out the reaction N(2)-acetyl-L-ornithine + 2-oxoglutarate = N-acetyl-L-glutamate 5-semialdehyde + L-glutamate. The protein operates within amino-acid biosynthesis; L-arginine biosynthesis; N(2)-acetyl-L-ornithine from L-glutamate: step 4/4. The polypeptide is Acetylornithine aminotransferase (Shewanella oneidensis (strain ATCC 700550 / JCM 31522 / CIP 106686 / LMG 19005 / NCIMB 14063 / MR-1)).